A 251-amino-acid polypeptide reads, in one-letter code: uncharacterized protein (251 aa).

12–36 provides a ligand contact to NADP(+); that stretch reads VVTGASSGIGEATARTLAAQGFHVV. Ser-136 lines the substrate pocket. The active-site Proton acceptor is Tyr-149.

It belongs to the short-chain dehydrogenases/reductases (SDR) family.

This is an uncharacterized protein from Mycobacterium tuberculosis (strain CDC 1551 / Oshkosh).